A 301-amino-acid polypeptide reads, in one-letter code: GTPase Era (301 aa).

Residues 7-175 form the Era-type G domain; that stretch reads YCGFIAIVGR…AAIVRKHLPE (169 aa). Residues 15 to 22 form a G1 region; it reads GRPNVGKS. 15 to 22 contacts GTP; it reads GRPNVGKS. The tract at residues 41–45 is G2; the sequence is QTTRH. The interval 62–65 is G3; the sequence is DTPG. GTP contacts are provided by residues 62–66 and 124–127; these read DTPGL and NKVD. A G4 region spans residues 124-127; the sequence is NKVD. The tract at residues 154–156 is G5; that stretch reads ISA. The KH type-2 domain occupies 206-283; the sequence is LGAELPYSVT…HLELWVKVKS (78 aa).

It belongs to the TRAFAC class TrmE-Era-EngA-EngB-Septin-like GTPase superfamily. Era GTPase family. Monomer.

The protein localises to the cytoplasm. The protein resides in the cell inner membrane. Functionally, an essential GTPase that binds both GDP and GTP, with rapid nucleotide exchange. Plays a role in 16S rRNA processing and 30S ribosomal subunit biogenesis and possibly also in cell cycle regulation and energy metabolism. In Shigella flexneri serotype 5b (strain 8401), this protein is GTPase Era.